The primary structure comprises 250 residues: MARELKEVQGIIFKRQKYKEADLLAKIITKQSGIITLIVKGAMRPKSKLSAATLNFSAGTYVIYTSGHGLSNLRTYKKVQQFDALYRDLTKNAYVSFIFDLIDHAFVEYQPLGQYYNLAVFALEKISAGVDSEMITQIVQMKMLSAYGVKPELSHCVICGKEKGIFDYSIKLGGVICSDHFNVVESRLHLKPKETAILRTIGLLPIERLGTIKVSEESKRATRKAIDRIYRETIDLNLKTKKFLDELKLF.

It belongs to the RecO family.

Functionally, involved in DNA repair and RecF pathway recombination. This chain is DNA repair protein RecO, found in Lactobacillus acidophilus (strain ATCC 700396 / NCK56 / N2 / NCFM).